The sequence spans 436 residues: UDP-N-acetylmuramate--L-alanine ligase (436 aa).

Glycine 108–serine 114 lines the ATP pocket.

Belongs to the MurCDEF family.

The protein localises to the cytoplasm. The enzyme catalyses UDP-N-acetyl-alpha-D-muramate + L-alanine + ATP = UDP-N-acetyl-alpha-D-muramoyl-L-alanine + ADP + phosphate + H(+). It functions in the pathway cell wall biogenesis; peptidoglycan biosynthesis. Cell wall formation. The chain is UDP-N-acetylmuramate--L-alanine ligase from Bacillus cereus (strain AH187).